The sequence spans 92 residues: Putative septation protein SpoVG (92 aa).

It belongs to the SpoVG family.

Could be involved in septation. The protein is Putative septation protein SpoVG of Thermoanaerobacter sp. (strain X514).